The following is a 187-amino-acid chain: Large ribosomal subunit protein uL6 (187 aa).

The protein belongs to the universal ribosomal protein uL6 family. As to quaternary structure, part of the 50S ribosomal subunit.

Its function is as follows. This protein binds to the 23S rRNA, and is important in its secondary structure. It is located near the subunit interface in the base of the L7/L12 stalk, and near the tRNA binding site of the peptidyltransferase center. This chain is Large ribosomal subunit protein uL6, found in Roseiflexus sp. (strain RS-1).